The sequence spans 254 residues: Imidazole glycerol phosphate synthase subunit HisF (254 aa).

Residues D12 and D131 contribute to the active site.

This sequence belongs to the HisA/HisF family. As to quaternary structure, heterodimer of HisH and HisF.

The protein resides in the cytoplasm. It carries out the reaction 5-[(5-phospho-1-deoxy-D-ribulos-1-ylimino)methylamino]-1-(5-phospho-beta-D-ribosyl)imidazole-4-carboxamide + L-glutamine = D-erythro-1-(imidazol-4-yl)glycerol 3-phosphate + 5-amino-1-(5-phospho-beta-D-ribosyl)imidazole-4-carboxamide + L-glutamate + H(+). Its pathway is amino-acid biosynthesis; L-histidine biosynthesis; L-histidine from 5-phospho-alpha-D-ribose 1-diphosphate: step 5/9. In terms of biological role, IGPS catalyzes the conversion of PRFAR and glutamine to IGP, AICAR and glutamate. The HisF subunit catalyzes the cyclization activity that produces IGP and AICAR from PRFAR using the ammonia provided by the HisH subunit. The chain is Imidazole glycerol phosphate synthase subunit HisF from Leuconostoc mesenteroides subsp. mesenteroides (strain ATCC 8293 / DSM 20343 / BCRC 11652 / CCM 1803 / JCM 6124 / NCDO 523 / NBRC 100496 / NCIMB 8023 / NCTC 12954 / NRRL B-1118 / 37Y).